Reading from the N-terminus, the 219-residue chain is Phosphatidylinositol phosphate synthase (219 aa).

29-32 contacts a CDP-1,2-diacyl-sn-glycerol; the sequence is NQLT. A run of 2 helical transmembrane segments spans residues 31-47 and 53-72; these read LTLV…LLLI and IWAA…DGTV. The Mg(2+) site is built by Asp66 and Asp69. Residues Gly70, Arg74, and Thr80 each contribute to the a CDP-1,2-diacyl-sn-glycerol site. Residues Asp87 and Asp91 each coordinate Mg(2+). Catalysis depends on Asp91, which acts as the Proton acceptor. 4 consecutive transmembrane segments (helical) span residues 93–110, 116–133, 154–171, and 177–194; these read ITDG…VYSY, LVAA…ISYV, RLIV…GVPY, and LWAL…RLVM.

It belongs to the CDP-alcohol phosphatidyltransferase class-I family. As to quaternary structure, homodimer. Requires Mg(2+) as cofactor.

It localises to the cell membrane. It carries out the reaction a CDP-1,2-diacyl-sn-glycerol + 1D-myo-inositol 3-phosphate = a 1,2-diacyl-sn-glycero-3-phospho-(1D-myo-inositol-3-phosphate) + CMP + H(+). The enzyme catalyses 1,2-di-(9Z-octadecenoyl)-sn-glycero-3-cytidine-5'-diphosphate + 1D-myo-inositol 3-phosphate = 1,2-di-(9Z-octadecenoyl)-sn-glycero-3-phospho-(1D-myo-inositol-3-phosphate) + CMP + H(+). It participates in phospholipid metabolism; phosphatidylinositol phosphate biosynthesis. In terms of biological role, catalyzes the conjugation of the 1'-hydroxyl group of D-myo-inositol-3-phosphate (also named L-myo-inositol-1-phosphate) with a lipid tail of cytidine diphosphate diacylglycerol (CDP-DAG), forming phosphatidylinositol phosphate (PIP) and CMP. PIP is a precursor of phosphatidylinositol (PI) which is an essential lipid required for cell wall formation. In Corynebacterium glutamicum (strain ATCC 13032 / DSM 20300 / JCM 1318 / BCRC 11384 / CCUG 27702 / LMG 3730 / NBRC 12168 / NCIMB 10025 / NRRL B-2784 / 534), this protein is Phosphatidylinositol phosphate synthase.